The sequence spans 691 residues: Elongation factor G (691 aa).

In terms of domain architecture, tr-type G spans 8–283 (EDYRNFGIMA…AVVDFLPNPT (276 aa)). GTP is bound by residues 17-24 (AHIDAGKT), 81-85 (DTPGH), and 135-138 (NKMD).

The protein belongs to the TRAFAC class translation factor GTPase superfamily. Classic translation factor GTPase family. EF-G/EF-2 subfamily.

It is found in the cytoplasm. In terms of biological role, catalyzes the GTP-dependent ribosomal translocation step during translation elongation. During this step, the ribosome changes from the pre-translocational (PRE) to the post-translocational (POST) state as the newly formed A-site-bound peptidyl-tRNA and P-site-bound deacylated tRNA move to the P and E sites, respectively. Catalyzes the coordinated movement of the two tRNA molecules, the mRNA and conformational changes in the ribosome. This chain is Elongation factor G, found in Maricaulis maris (strain MCS10) (Caulobacter maris).